The following is a 355-amino-acid chain: Phospho-N-acetylmuramoyl-pentapeptide-transferase (355 aa).

A run of 10 helical transmembrane segments spans residues 14–34 (PTGT…VVFF), 40–60 (LLIP…QVVP), 84–104 (GTPT…ALIW), 107–127 (FTPN…IGWL), 147–167 (LILQ…NQVS), 176–196 (LVIP…VAES), 205–225 (VDGL…IIIA), 227–247 (SHPD…GFIF), 268–290 (ALAA…GLFF), and 334–354 (TKIV…AIWS).

Belongs to the glycosyltransferase 4 family. MraY subfamily. Mg(2+) is required as a cofactor.

It is found in the cell inner membrane. It carries out the reaction UDP-N-acetyl-alpha-D-muramoyl-L-alanyl-gamma-D-glutamyl-meso-2,6-diaminopimeloyl-D-alanyl-D-alanine + di-trans,octa-cis-undecaprenyl phosphate = di-trans,octa-cis-undecaprenyl diphospho-N-acetyl-alpha-D-muramoyl-L-alanyl-D-glutamyl-meso-2,6-diaminopimeloyl-D-alanyl-D-alanine + UMP. Its pathway is cell wall biogenesis; peptidoglycan biosynthesis. In terms of biological role, catalyzes the initial step of the lipid cycle reactions in the biosynthesis of the cell wall peptidoglycan: transfers peptidoglycan precursor phospho-MurNAc-pentapeptide from UDP-MurNAc-pentapeptide onto the lipid carrier undecaprenyl phosphate, yielding undecaprenyl-pyrophosphoryl-MurNAc-pentapeptide, known as lipid I. The sequence is that of Phospho-N-acetylmuramoyl-pentapeptide-transferase from Microcystis aeruginosa (strain NIES-843 / IAM M-2473).